The primary structure comprises 168 residues: Large ribosomal subunit protein uL5 (168 aa).

The protein belongs to the universal ribosomal protein uL5 family. In terms of assembly, part of the 50S ribosomal subunit; contacts the 5S rRNA and probably tRNA. Forms a bridge to the 30S subunit in the 70S ribosome.

In terms of biological role, this is one of the proteins that bind and probably mediate the attachment of the 5S RNA into the large ribosomal subunit, where it forms part of the central protuberance. In the 70S ribosome it contacts protein S13 of the 30S subunit (bridge B1b), connecting the 2 subunits; this bridge is implicated in subunit movement. May contact the P site tRNA; the 5S rRNA and some of its associated proteins might help stabilize positioning of ribosome-bound tRNAs. This Methanospirillum hungatei JF-1 (strain ATCC 27890 / DSM 864 / NBRC 100397 / JF-1) protein is Large ribosomal subunit protein uL5.